A 206-amino-acid chain; its full sequence is Small ribosomal subunit protein uS4 (206 aa).

Residues 94–156 enclose the S4 RNA-binding domain; that stretch reads RRLDNVVYRL…SRRRMYFKNL (63 aa).

The protein belongs to the universal ribosomal protein uS4 family. Part of the 30S ribosomal subunit. Contacts protein S5. The interaction surface between S4 and S5 is involved in control of translational fidelity.

Functionally, one of the primary rRNA binding proteins, it binds directly to 16S rRNA where it nucleates assembly of the body of the 30S subunit. With S5 and S12 plays an important role in translational accuracy. The polypeptide is Small ribosomal subunit protein uS4 (Roseiflexus castenholzii (strain DSM 13941 / HLO8)).